Here is a 440-residue protein sequence, read N- to C-terminus: MSDVSFHDLSSLDATQRSSLLKRAEADLSVFVEKVRPIIQAVKDEGDAALIRFARELDKANVAEGGLQVSEAEFDAAFDKVEKDVVESIGFGIDNIRRFHEEQKPETMWLKEVRPGAYAGDRYTPIASVALYVPRGKGAFPSVTMMTSVPAVIAGVPQIAIVTPPTSDGSVDAATLVAARLAGVHTVYKCGGAQAVAAVAYGTETVKPALKIVGPGSPWVVAAKSELSSIINTGLPAGPSEAIIFADDSVDGGLAALDLLIEAEHGPDSSAYLVTHSRKVAEAALAALPQHWSRMTEQRVEFSRAVLTGKRGGIVLTASLEDSYRFINDYAPEHLEILSKEPFAHLGHITEAAEILMGPHTPVTLANFVLGPNAVLPTSRWARTYGPLSVTDFVKRSSVGYVTSAAYPELAKHARRLARYEGFSSHENAVSEIRDRYLAG.

H265 contributes to the Zn(2+) binding site. Residues E333 and H334 each act as proton acceptor in the active site. H426 contributes to the Zn(2+) binding site.

The protein belongs to the histidinol dehydrogenase family. Zn(2+) serves as cofactor.

This Mesorhizobium japonicum (strain LMG 29417 / CECT 9101 / MAFF 303099) (Mesorhizobium loti (strain MAFF 303099)) protein is Histidinol dehydrogenase homolog 2.